The sequence spans 82 residues: RNA-binding protein Hfq (82 aa).

Residues D10–V70 enclose the Sm domain.

It belongs to the Hfq family. Homohexamer.

Functionally, RNA chaperone that binds small regulatory RNA (sRNAs) and mRNAs to facilitate mRNA translational regulation in response to envelope stress, environmental stress and changes in metabolite concentrations. Also binds with high specificity to tRNAs. The chain is RNA-binding protein Hfq from Parvibaculum lavamentivorans (strain DS-1 / DSM 13023 / NCIMB 13966).